The following is a 757-amino-acid chain: Vitamin K-dependent gamma-carboxylase (757 aa).

Alanine 2 carries the post-translational modification N-acetylalanine. Residues 2 to 60 are Cytoplasmic-facing; sequence AVHRGSALVAPASDKVQKNKSAQTSGLKQGSRMEKILGFEWTDLSSWQSVVTLLNKPTD. The chain crosses the membrane as a helical span at residues 61–81; it reads PANLAVFRFLFAFLMLLDIPQ. At 82–113 the chain is on the lumenal side; the sequence is ERGLSSLDRKYLDGLDVCRFPLLDALRPLPLD. Cysteine 99 and cysteine 450 form a disulfide bridge. A helical membrane pass occupies residues 114–134; that stretch reads WMYLVYTIMFLGALGMMLGLC. Topologically, residues 135–136 are cytoplasmic; that stretch reads YR. A helical transmembrane segment spans residues 137 to 157; it reads LSCVLFLLPYWYVFLLDKTSW. Residues 158-292 are Lumenal-facing; sequence NNHSYLYGLL…VSYFHCMNSQ (135 aa). A helical transmembrane segment spans residues 293-313; the sequence is LFSIGMFPYVMLASSPLFCSA. Topologically, residues 314–361 are cytoplasmic; it reads EWPRKLVARCPKRLQELLPTKAAPRPSASCVYKRSRGKAGPKPGLRHQ. The helical transmembrane segment at 362–382 threads the bilayer; it reads LGAIFTLLYLLEQLFLPYSHF. Residues 383 to 757 lie on the Lumenal side of the membrane; sequence LTQGYNNWTN…PDSEHVHSEF (375 aa). Positions 729–757 are disordered; sequence EPVDESSASNTDSSNHPSEPDSEHVHSEF. A compositionally biased stretch (polar residues) spans 734-745; the sequence is SSASNTDSSNHP. Over residues 746–757 the composition is skewed to basic and acidic residues; the sequence is SEPDSEHVHSEF.

Belongs to the vitamin K-dependent gamma-carboxylase family. As to quaternary structure, monomer. May interact with CALU.

It is found in the endoplasmic reticulum membrane. It carries out the reaction 4-carboxy-L-glutamyl-[protein] + 2,3-epoxyphylloquinone + H2O + H(+) = phylloquinol + L-glutamyl-[protein] + CO2 + O2. In terms of biological role, mediates the vitamin K-dependent carboxylation of glutamate residues to calcium-binding gamma-carboxyglutamate (Gla) residues with the concomitant conversion of the reduced hydroquinone form of vitamin K to vitamin K epoxide. Catalyzes gamma-carboxylation of various proteins, such as blood coagulation factors (F2, F7, F9 and F10), osteocalcin (bglap and bglap2) or matrix Gla protein (MGP). The protein is Vitamin K-dependent gamma-carboxylase (Ggcx) of Mus musculus (Mouse).